A 380-amino-acid chain; its full sequence is Glucose-1-phosphate adenylyltransferase (380 aa).

Alpha-D-glucose 1-phosphate-binding positions include glycine 164, 179–180 (EK), and serine 190.

Belongs to the bacterial/plant glucose-1-phosphate adenylyltransferase family. As to quaternary structure, homotetramer.

It catalyses the reaction alpha-D-glucose 1-phosphate + ATP + H(+) = ADP-alpha-D-glucose + diphosphate. It participates in glycan biosynthesis; glycogen biosynthesis. Involved in the biosynthesis of ADP-glucose, a building block required for the elongation reactions to produce glycogen. Catalyzes the reaction between ATP and alpha-D-glucose 1-phosphate (G1P) to produce pyrophosphate and ADP-Glc. This Streptococcus pneumoniae (strain CGSP14) protein is Glucose-1-phosphate adenylyltransferase.